A 120-amino-acid polypeptide reads, in one-letter code: ATP-dependent Clp protease adapter protein ClpS (120 aa).

It belongs to the ClpS family. Binds to the N-terminal domain of the chaperone ClpA.

Functionally, involved in the modulation of the specificity of the ClpAP-mediated ATP-dependent protein degradation. The protein is ATP-dependent Clp protease adapter protein ClpS of Pseudomonas syringae pv. tomato (strain ATCC BAA-871 / DC3000).